The chain runs to 94 residues: Co-chaperonin GroES (94 aa).

This sequence belongs to the GroES chaperonin family. As to quaternary structure, heptamer of 7 subunits arranged in a ring. Interacts with the chaperonin GroEL.

The protein localises to the cytoplasm. Its function is as follows. Together with the chaperonin GroEL, plays an essential role in assisting protein folding. The GroEL-GroES system forms a nano-cage that allows encapsulation of the non-native substrate proteins and provides a physical environment optimized to promote and accelerate protein folding. GroES binds to the apical surface of the GroEL ring, thereby capping the opening of the GroEL channel. The chain is Co-chaperonin GroES from Lactococcus lactis subsp. cremoris (strain MG1363).